Here is a 174-residue protein sequence, read N- to C-terminus: SUSHI domain-containing protein E3 (174 aa).

Positions 1 to 20 (MATEVQFACALVVLLGCGYA) are cleaved as a signal peptide. The region spanning 35–97 (QNCTTYPSIE…WTNGPPSCVK (63 aa)) is the Sushi domain. 2 cysteine pairs are disulfide-bonded: Cys37-Cys78 and Cys64-Cys95. A compositionally biased stretch (low complexity) spans 108-127 (STSTTPVTTGTFPDPQNTTH). A disordered region spans residues 108–133 (STSTTPVTTGTFPDPQNTTHPTHHTV). Residues 145–165 (FGYTPWAIITLVVIILLVVWI) form a helical membrane-spanning segment.

The protein resides in the host membrane. This is SUSHI domain-containing protein E3 (E3) from Equine herpesvirus 2 (strain 86/87) (EHV-2).